The chain runs to 282 residues: D-alanine aminotransferase (282 aa).

Tyrosine 32 provides a ligand contact to substrate. Arginine 51 provides a ligand contact to pyridoxal 5'-phosphate. 2 residues coordinate substrate: arginine 99 and histidine 101. Lysine 146 functions as the Proton acceptor in the catalytic mechanism. Lysine 146 carries the post-translational modification N6-(pyridoxal phosphate)lysine. Glutamate 178 serves as a coordination point for pyridoxal 5'-phosphate.

Belongs to the class-IV pyridoxal-phosphate-dependent aminotransferase family. As to quaternary structure, homodimer. Pyridoxal 5'-phosphate serves as cofactor.

It catalyses the reaction D-alanine + 2-oxoglutarate = D-glutamate + pyruvate. Functionally, acts on the D-isomers of alanine, leucine, aspartate, glutamate, aminobutyrate, norvaline and asparagine. The enzyme transfers an amino group from a substrate D-amino acid to the pyridoxal phosphate cofactor to form pyridoxamine and an alpha-keto acid in the first half-reaction. The second half-reaction is the reverse of the first, transferring the amino group from the pyridoxamine to a second alpha-keto acid to form the product D-amino acid via a ping-pong mechanism. This is an important process in the formation of D-alanine and D-glutamate, which are essential bacterial cell wall components. In Staphylococcus haemolyticus, this protein is D-alanine aminotransferase (dat).